The primary structure comprises 196 residues: Imidazole glycerol phosphate synthase subunit HisH (196 aa).

Positions 2 to 196 (KVVILDTGCA…AQLLKNFLEM (195 aa)) constitute a Glutamine amidotransferase type-1 domain. The active-site Nucleophile is the cysteine 77. Catalysis depends on residues histidine 178 and glutamate 180.

In terms of assembly, heterodimer of HisH and HisF.

Its subcellular location is the cytoplasm. It carries out the reaction 5-[(5-phospho-1-deoxy-D-ribulos-1-ylimino)methylamino]-1-(5-phospho-beta-D-ribosyl)imidazole-4-carboxamide + L-glutamine = D-erythro-1-(imidazol-4-yl)glycerol 3-phosphate + 5-amino-1-(5-phospho-beta-D-ribosyl)imidazole-4-carboxamide + L-glutamate + H(+). It catalyses the reaction L-glutamine + H2O = L-glutamate + NH4(+). Its pathway is amino-acid biosynthesis; L-histidine biosynthesis; L-histidine from 5-phospho-alpha-D-ribose 1-diphosphate: step 5/9. Its function is as follows. IGPS catalyzes the conversion of PRFAR and glutamine to IGP, AICAR and glutamate. The HisH subunit catalyzes the hydrolysis of glutamine to glutamate and ammonia as part of the synthesis of IGP and AICAR. The resulting ammonia molecule is channeled to the active site of HisF. This chain is Imidazole glycerol phosphate synthase subunit HisH, found in Pectobacterium atrosepticum (strain SCRI 1043 / ATCC BAA-672) (Erwinia carotovora subsp. atroseptica).